The primary structure comprises 196 residues: FMN-dependent NADH:quinone oxidoreductase (196 aa).

FMN-binding positions include Ser-10, 16 to 18 (SQS), 93 to 96 (MYNF), and 137 to 140 (TRGG).

This sequence belongs to the azoreductase type 1 family. As to quaternary structure, homodimer. The cofactor is FMN.

The catalysed reaction is 2 a quinone + NADH + H(+) = 2 a 1,4-benzosemiquinone + NAD(+). It catalyses the reaction N,N-dimethyl-1,4-phenylenediamine + anthranilate + 2 NAD(+) = 2-(4-dimethylaminophenyl)diazenylbenzoate + 2 NADH + 2 H(+). Its function is as follows. Quinone reductase that provides resistance to thiol-specific stress caused by electrophilic quinones. Functionally, also exhibits azoreductase activity. Catalyzes the reductive cleavage of the azo bond in aromatic azo compounds to the corresponding amines. In Shewanella amazonensis (strain ATCC BAA-1098 / SB2B), this protein is FMN-dependent NADH:quinone oxidoreductase.